A 422-amino-acid chain; its full sequence is C-type lectin domain family 4 member M (422 aa).

At 1-49 (MSDSKEPRVQPLGLLEEDPTTSGIRLFPRDFQFQQTHGHKSSTGCLGHG) the chain is on the cytoplasmic side. The Endocytosis signal motif lies at 14 to 15 (LL). Residues 50–70 (PLVLQLLSFALLAGVLVAILV) traverse the membrane as a helical; Signal-anchor for type II membrane protein segment. At 71–422 (QVYKVPSSLS…KKPIACFRDE (352 aa)) the chain is on the extracellular side. An N-linked (GlcNAc...) asparagine glycan is attached at Asn-92. 8 tandem repeats follow at residues 108-130 (KLQEIYQELTQLKAAVGELPEKS), 131-151 (KQQEIYQELTQLKASVGELPE), 154-176 (QLQEIYQELTRLKAAVGELPEES), 177-199 (RLQEIYQELTRLKAAVGELPEKS), 200-222 (RLQEIYQELTRLKAAVGELPEKS), 223-245 (RLQEIYQELTRLKAAVGELPEKS), 246-268 (KLQEIYQELTRLKAAVGELPDQS), and 269-291 (KQQQIYQELTDLKTAFERLCCRC). Residues 108-292 (KLQEIYQELT…AFERLCCRCP (185 aa)) are 8 X approximate tandem repeats. 4 cysteine pairs are disulfide-bonded: Cys-288–Cys-418, Cys-291–Cys-302, Cys-319–Cys-412, and Cys-391–Cys-404. Positions 297-413 (FFQGNCYFMS…CNVDNYWICK (117 aa)) constitute a C-type lectin domain. Glu-382, Asn-384, Ser-386, Glu-389, Asn-400, and Asp-401 together coordinate Ca(2+). The N-linked (GlcNAc...) asparagine glycan is linked to Asn-384.

As to quaternary structure, homotetramer.

Its subcellular location is the membrane. In terms of biological role, probable pathogen-recognition receptor involved in peripheral immune surveillance in liver. May mediate the endocytosis of pathogens which are subsequently degraded in lysosomal compartments. Probably recognizes in a calcium-dependent manner high mannose N-linked oligosaccharides in a variety of pathogen antigens. Is a receptor for ICAM3, probably by binding to mannose-like carbohydrates. The chain is C-type lectin domain family 4 member M (CLEC4M) from Symphalangus syndactylus (Siamang).